The following is a 676-amino-acid chain: DNA ligase (676 aa).

NAD(+)-binding positions include 34–38 (DQEFD), 83–84 (SL), and Glu117. The N6-AMP-lysine intermediate role is filled by Lys119. Residues Arg140, Glu177, Lys285, and Lys309 each coordinate NAD(+). The Zn(2+) site is built by Cys403, Cys406, Cys427, and Cys434. A BRCT domain is found at 595–676 (NNNGLLKNKT…EWLKMLNKSG (82 aa)).

It belongs to the NAD-dependent DNA ligase family. LigA subfamily. Requires Mg(2+) as cofactor. It depends on Mn(2+) as a cofactor.

It carries out the reaction NAD(+) + (deoxyribonucleotide)n-3'-hydroxyl + 5'-phospho-(deoxyribonucleotide)m = (deoxyribonucleotide)n+m + AMP + beta-nicotinamide D-nucleotide.. DNA ligase that catalyzes the formation of phosphodiester linkages between 5'-phosphoryl and 3'-hydroxyl groups in double-stranded DNA using NAD as a coenzyme and as the energy source for the reaction. It is essential for DNA replication and repair of damaged DNA. In Pelagibacter ubique (strain HTCC1062), this protein is DNA ligase.